The following is a 154-amino-acid chain: Avirulence protein ATR13 (154 aa).

A signal peptide spans 1 to 19 (MRLVHAVLLPGIIVFVSNG). The RxLR signature appears at 38–41 (RQLR). Positions 50–92 (LSRASFGLGKAQDPLDKFFSKIIFSGKPIETSYSAKGIHEKII) are leucine heptad repeat region. Positions 93 to 103 (EAHDLHVSKSK) are single repeat region. Residues 104–154 (NAPIQYASVMEYLKKTYPGPDIERIVSTLERHDEVGAKDLGAKLRDALDRQ) are highly variable C-terminus domain.

This sequence belongs to the RxLR effector family.

The protein localises to the secreted. It localises to the host cytoplasm. Functionally, secreted effector that acts as an elicitor of hypersensitive response (HR) specifically on plants carrying defense protein RPP13. Recognition of ATR13 by RPP13 initiates defense responses that are effective against oomycete, bacterial and viral pathogens. The allele ATR13-Emco5 recognizes RPP13-Nd, the RPP13 defense protein from Arabidopsis thaliana ecotype Niederzenz. In Hyaloperonospora arabidopsidis (Peronospora arabidopsidis), this protein is Avirulence protein ATR13.